We begin with the raw amino-acid sequence, 439 residues long: Methylenetetrahydrofolate--tRNA-(uracil-5-)-methyltransferase TrmFO (439 aa).

8 to 13 (GAGLAG) provides a ligand contact to FAD.

It belongs to the MnmG family. TrmFO subfamily. The cofactor is FAD.

Its subcellular location is the cytoplasm. The enzyme catalyses uridine(54) in tRNA + (6R)-5,10-methylene-5,6,7,8-tetrahydrofolate + NADH + H(+) = 5-methyluridine(54) in tRNA + (6S)-5,6,7,8-tetrahydrofolate + NAD(+). It catalyses the reaction uridine(54) in tRNA + (6R)-5,10-methylene-5,6,7,8-tetrahydrofolate + NADPH + H(+) = 5-methyluridine(54) in tRNA + (6S)-5,6,7,8-tetrahydrofolate + NADP(+). Its function is as follows. Catalyzes the folate-dependent formation of 5-methyl-uridine at position 54 (M-5-U54) in all tRNAs. This chain is Methylenetetrahydrofolate--tRNA-(uracil-5-)-methyltransferase TrmFO, found in Magnetococcus marinus (strain ATCC BAA-1437 / JCM 17883 / MC-1).